A 234-amino-acid polypeptide reads, in one-letter code: Large ribosomal subunit protein bL25 (234 aa).

The tract at residues methionine 1–arginine 24 is disordered.

It belongs to the bacterial ribosomal protein bL25 family. CTC subfamily. As to quaternary structure, part of the 50S ribosomal subunit; part of the 5S rRNA/L5/L18/L25 subcomplex. Contacts the 5S rRNA. Binds to the 5S rRNA independently of L5 and L18.

Its function is as follows. This is one of the proteins that binds to the 5S RNA in the ribosome where it forms part of the central protuberance. This chain is Large ribosomal subunit protein bL25, found in Rhodopseudomonas palustris (strain BisB5).